The primary structure comprises 449 residues: Xylose isomerase (449 aa).

Residues H101 and D104 contribute to the active site. Mg(2+) contacts are provided by E232, E268, H271, D296, D307, D309, and D340.

This sequence belongs to the xylose isomerase family. In terms of assembly, homotetramer. Requires Mg(2+) as cofactor.

The protein localises to the cytoplasm. The catalysed reaction is alpha-D-xylose = alpha-D-xylulofuranose. This Bifidobacterium longum (strain NCC 2705) protein is Xylose isomerase.